The sequence spans 695 residues: Probable glucan endo-1,3-beta-glucosidase btgC (695 aa).

4 disordered regions span residues 1 to 53 (MSGP…THHG), 117 to 140 (RRGT…GSDN), 175 to 258 (GPAG…RSQA), and 286 to 314 (ETSY…STGS). Residues 1–317 (MSGPHRTFSF…PKPSTGSRKR (317 aa)) are Cytoplasmic-facing. The span at 36–45 (PISNMSSSPG) shows a compositional bias: polar residues. Polar residues predominate over residues 188 to 198 (HLGTSNSSQRN). Acidic residues predominate over residues 231-241 (NPEEIADDGDD). Residues 318-338 (GWIIGAILAVIIIGAIVGGAV) form a helical; Signal-anchor for type II membrane protein membrane-spanning segment. Residues 339-695 (GGTIGHKDSG…IPDCGGKTAA (357 aa)) are Extracellular-facing. The disordered stretch occupies residues 346–372 (DSGDSASGSSASTQSASGDTDTNGDLD). A compositionally biased stretch (low complexity) spans 349–366 (DSASGSSASTQSASGDTD). Asparagine 415, asparagine 438, and asparagine 466 each carry an N-linked (GlcNAc...) asparagine glycan. Glutamate 498 serves as the catalytic Proton donor. Residue glutamate 597 is the Nucleophile of the active site. N-linked (GlcNAc...) asparagine glycosylation is present at asparagine 642.

Belongs to the glycosyl hydrolase 17 family.

The protein localises to the cell membrane. The catalysed reaction is Hydrolysis of (1-&gt;3)-beta-D-glucosidic linkages in (1-&gt;3)-beta-D-glucans.. Functionally, glucanases play a role in cell expansion during growth, in cell-cell fusion during mating, and in spore release during sporulation. This enzyme may be involved in beta-glucan degradation. Active on laminarin and lichenan. This chain is Probable glucan endo-1,3-beta-glucosidase btgC (btgC), found in Aspergillus clavatus (strain ATCC 1007 / CBS 513.65 / DSM 816 / NCTC 3887 / NRRL 1 / QM 1276 / 107).